A 334-amino-acid chain; its full sequence is Terpene synthase 1 (334 aa).

2 residues coordinate Mg(2+): Asp82 and Asp86. A D(D/E)XX(D/E) motif motif is present at residues 82–86; it reads DDIFD. Arg184 lines the substrate pocket. Mg(2+) is bound by residues Asn230, Ser234, and Glu238. Positions 230 to 238 match the NSE motif motif; it reads NDIYSYHRE. The WxxxxxRY motif signature appears at 309–316; sequence WSESCTRY.

This sequence belongs to the terpene synthase family. Mg(2+) serves as cofactor.

The enzyme catalyses (2E,6E)-farnesyl diphosphate = gamma-muurolene + diphosphate. The catalysed reaction is (2E,6E)-farnesyl diphosphate = alpha-muurolene + diphosphate. It catalyses the reaction (2E,6E)-farnesyl diphosphate = (-)-(E)-beta-caryophyllene + diphosphate. It carries out the reaction (2E)-geranyl diphosphate = beta-myrcene + diphosphate. In terms of biological role, terpene synthase that catalyzes the cyclization of farnesyl diphosphate (FPP) into a mixture of sesquiterpenes with gamma-muurolene as the most abundant compound and (-)-beta-caryophyllene, alpha-muurolene, and 4 unidentified sesquiterpenes as minor compoundss. TPS1 also shows monoterpene synthase activity and can also use geranyl diphosphate (GPP) as a substrate to convert it into a mixture of cyclic and acyclic monoterpenes, including myrcene and linalool. P.polycephalum has a unique biology and these volatile terpenoids could function in internal communication of P.polycephalum, to mark the territory that have been explored, or they may be involved in chemotaxis. This is Terpene synthase 1 from Physarum polycephalum (Slime mold).